Reading from the N-terminus, the 131-residue chain is Large ribosomal subunit protein bL19 (131 aa).

The protein belongs to the bacterial ribosomal protein bL19 family.

In terms of biological role, this protein is located at the 30S-50S ribosomal subunit interface and may play a role in the structure and function of the aminoacyl-tRNA binding site. The protein is Large ribosomal subunit protein bL19 of Caulobacter sp. (strain K31).